Here is a 427-residue protein sequence, read N- to C-terminus: Ribose-phosphate pyrophosphokinase 1 (427 aa).

D128, H130, and D143 together coordinate Mg(2+). 4 positions are modified to phosphoserine: S199, S218, S271, and S295.

Belongs to the ribose-phosphate pyrophosphokinase family.

The protein resides in the cytoplasm. It carries out the reaction D-ribose 5-phosphate + ATP = 5-phospho-alpha-D-ribose 1-diphosphate + AMP + H(+). It participates in metabolic intermediate biosynthesis; 5-phospho-alpha-D-ribose 1-diphosphate biosynthesis; 5-phospho-alpha-D-ribose 1-diphosphate from D-ribose 5-phosphate (route I): step 1/1. In terms of biological role, 5-phosphoribose 1-diphosphate synthase involved in nucleotide, histidine, and tryptophan biosynthesis. Active in heteromultimeric complexes with other 5-phosphoribose 1-diphosphate synthases (PRS2, PRS3, PRS4 and PRS5). The protein is Ribose-phosphate pyrophosphokinase 1 (PRS1) of Saccharomyces cerevisiae (strain ATCC 204508 / S288c) (Baker's yeast).